The chain runs to 395 residues: Protein TAMALIN (395 aa).

The disordered stretch occupies residues 1–52; sequence MTLRRLRKLQQKEEAAATPDPAARTPDSEVAPAAPVPTPGPPAAAATPGPPA. Residues 16-33 show a composition bias toward low complexity; sequence AATPDPAARTPDSEVAPA. Position 77 is a phosphothreonine (threonine 77). Serine 94 is subject to Phosphoserine. Residues 101 to 190 form the PDZ domain; it reads VLTLEKEDNQ…VLRLETLYGT (90 aa). The segment at 181–258 is interaction with PSCD3; it reads VLRLETLYGT…GAGLLPGSLP (78 aa). Tyrosine 237 is modified (phosphotyrosine). Arginine 270 bears the Omega-N-methylarginine mark. The tract at residues 293-349 is disordered; sequence SEPPALPPPPPPARAFGPGPAETPAVGPGPGPRAALSRSASVRCAGPGGGGGGGAPG. A compositionally biased stretch (pro residues) spans 296 to 305; it reads PALPPPPPPA. Positions 338 to 348 are enriched in gly residues; the sequence is GPGGGGGGGAP. Residue serine 387 is modified to Phosphoserine.

Heteromer. Composed of TAMALIN, CYTH2 and at least one GRM1. Also interacts with CYTH3, GRM2, GRM3 and GRM5.

The protein resides in the cytoplasm. It localises to the perinuclear region. The protein localises to the cell membrane. Its subcellular location is the postsynaptic cell membrane. In terms of biological role, plays a role in intracellular trafficking and contributes to the macromolecular organization of group 1 metabotropic glutamate receptors (mGluRs) at synapses. The chain is Protein TAMALIN from Homo sapiens (Human).